The chain runs to 245 residues: Thiopurine S-methyltransferase (245 aa).

Ser14 carries the post-translational modification Phosphoserine. S-adenosyl-L-methionine is bound at residue 29-40; that stretch reads WQDKWVNGKTAF. Residue Phe40 coordinates substrate. At Lys58 the chain carries N6-acetyllysine. Residues Leu69, Glu90, 134–135, and Arg152 each bind S-adenosyl-L-methionine; that span reads SI.

The protein belongs to the class I-like SAM-binding methyltransferase superfamily. TPMT family. Monomer.

It is found in the cytoplasm. It catalyses the reaction S-adenosyl-L-methionine + a thiopurine = S-adenosyl-L-homocysteine + a thiopurine S-methylether.. This is Thiopurine S-methyltransferase (TPMT) from Chlorocebus aethiops (Green monkey).